We begin with the raw amino-acid sequence, 455 residues long: Ectonucleoside triphosphate diphosphohydrolase 6 (455 aa).

Over 1 to 12 the chain is Cytoplasmic; that stretch reads MRKIPNHGTLRM. A helical membrane pass occupies residues 13–32; that stretch reads TKVAYPLGLCVGLFIYVAYI. Residues 33–455 lie on the Lumenal side of the membrane; that stretch reads KWHRASAAQA…SLKRQKVPAL (423 aa). Glutamate 196 functions as the Proton acceptor in the catalytic mechanism. Cystine bridges form between cysteine 297–cysteine 327 and cysteine 387–cysteine 401.

It belongs to the GDA1/CD39 NTPase family. Mg(2+) serves as cofactor. It depends on Ca(2+) as a cofactor. N-glycosylated.

It is found in the golgi apparatus membrane. The protein localises to the secreted. Its subcellular location is the cell membrane. It carries out the reaction a ribonucleoside 5'-diphosphate + H2O = a ribonucleoside 5'-phosphate + phosphate + H(+). The enzyme catalyses IDP + H2O = IMP + phosphate + H(+). The catalysed reaction is GDP + H2O = GMP + phosphate + H(+). It catalyses the reaction UDP + H2O = UMP + phosphate + H(+). Its function is as follows. Catalyzes the hydrolysis of nucleoside triphosphates and diphosphates in a calcium- or magnesium-dependent manner. Has a strong preference for nucleoside diphosphates, preferentially hydrolyzes GDP, IDP, and UDP, with slower hydrolysis of CDP, ITP, GTP, CTP, ADP, and UTP and virtually no hydrolysis of ATP. The membrane bound form might support glycosylation reactions in the Golgi apparatus and, when released from cells, might catalyze the hydrolysis of extracellular nucleotides. This Mus musculus (Mouse) protein is Ectonucleoside triphosphate diphosphohydrolase 6.